The sequence spans 115 residues: Transcriptional regulator protein FixT (115 aa).

In terms of assembly, interacts directly with FixL.

Its function is as follows. Prevents transcription of the intermediate key regulatory genes nifA and fixK by counteracting the activity of the FixLJ two-component system. Acts as an inhibitor of the sensor hemoprotein kinase fixL, preventing the production or the accumulation of its phosphorylated form. This is Transcriptional regulator protein FixT (fixT) from Rhizobium meliloti (strain 1021) (Ensifer meliloti).